The primary structure comprises 89 residues: Small ribosomal subunit protein uS15 (89 aa).

This sequence belongs to the universal ribosomal protein uS15 family. In terms of assembly, part of the 30S ribosomal subunit. Forms a bridge to the 50S subunit in the 70S ribosome, contacting the 23S rRNA.

In terms of biological role, one of the primary rRNA binding proteins, it binds directly to 16S rRNA where it helps nucleate assembly of the platform of the 30S subunit by binding and bridging several RNA helices of the 16S rRNA. Forms an intersubunit bridge (bridge B4) with the 23S rRNA of the 50S subunit in the ribosome. The sequence is that of Small ribosomal subunit protein uS15 from Limosilactobacillus reuteri (strain DSM 20016) (Lactobacillus reuteri).